The sequence spans 434 residues: V-type ATP synthase beta chain (434 aa).

Belongs to the ATPase alpha/beta chains family.

Its function is as follows. Produces ATP from ADP in the presence of a proton gradient across the membrane. The V-type beta chain is a regulatory subunit. In Borrelia garinii subsp. bavariensis (strain ATCC BAA-2496 / DSM 23469 / PBi) (Borreliella bavariensis), this protein is V-type ATP synthase beta chain.